Consider the following 1416-residue polypeptide: Uveal autoantigen with coiled-coil domains and ankyrin repeats (1416 aa).

Residue methionine 1 is modified to N-acetylmethionine. The segment at 1–24 (MKSLKSRLRRQDVPGPASSGAAAA) is disordered. ANK repeat units lie at residues 38-66 (LMKA…KLDV), 67-96 (EGRS…DITT), 100-129 (AGRN…PTEH), 133-162 (QGRT…SVNA), 166-195 (DGRT…DVNS), and 199-228 (QNRT…DISL). Coiled-coil stretches lie at residues 286 to 374 (VKSH…NRFK) and 438 to 1386 (ENEI…IYRT). Lysine 1035 is covalently cross-linked (Glycyl lysine isopeptide (Lys-Gly) (interchain with G-Cter in SUMO2)).

Component of the apoptosome complex, composed of APAF1, pro-caspase-9 and UACA. In the complex, it probably interacts directly with APAF1. Interacts with LGALS3, ARF6 and ACTB. Interacts with RAB39A. In terms of tissue distribution, highly expressed in skeletal muscle, heart, kidney and pancreas. Expressed in choroid, retina and epidermal melanocytes. Expressed in eye muscles and thyroid follicular cells.

It is found in the nucleus. The protein resides in the cytoplasm. Its subcellular location is the cytoskeleton. Its function is as follows. Regulates APAF1 expression and plays an important role in the regulation of stress-induced apoptosis. Promotes apoptosis by regulating three pathways, apoptosome up-regulation, LGALS3/galectin-3 down-regulation and NF-kappa-B inactivation. Regulates the redistribution of APAF1 into the nucleus after proapoptotic stress. Down-regulates the expression of LGALS3 by inhibiting NFKB1. Modulates isoactin dynamics to regulate the morphological alterations required for cell growth and motility. Interaction with ARF6 may modulate cell shape and motility after injury. May be involved in multiple neurite formation. The chain is Uveal autoantigen with coiled-coil domains and ankyrin repeats (UACA) from Homo sapiens (Human).